We begin with the raw amino-acid sequence, 330 residues long: Ferredoxin--NADP reductase (330 aa).

The FAD site is built by E35, Q43, Y48, V90, F123, D285, and T326.

It belongs to the ferredoxin--NADP reductase type 2 family. As to quaternary structure, homodimer. Requires FAD as cofactor.

It carries out the reaction 2 reduced [2Fe-2S]-[ferredoxin] + NADP(+) + H(+) = 2 oxidized [2Fe-2S]-[ferredoxin] + NADPH. This is Ferredoxin--NADP reductase from Streptococcus pyogenes serotype M6 (strain ATCC BAA-946 / MGAS10394).